We begin with the raw amino-acid sequence, 387 residues long: MTVLKMTDLDLQGKRVLIREDLNVPVKDGVVTSDARILAALPTIKLALEKGAAVMVCSHLGRPTEGEFSAENSLKPVADYLSKALGRDVALVADYLDGIEVKAGDLVLFENVRFNKGEKKNADELAQKYAALCDVFVMDAFGTAHRAEGSTHGVAKFAKVAAAGPLLAAELDALGKALKAPAKPMAAIVAGSKVSTKLDVLNSLSSVCDQLIVGGGIANTFLAAAGHPVGKSLYEPDLVETAKAIAAKVSVPLPVDVVVAKEFAESAEATVKAIADVAADDMILDIGPQTAANFAELLKSSKTILWNGPVGVFEFDQFGNGTKVLAKAIADSAAFSIAGGGDTLAAIDKYGVSAEISYISTGGGAFLEFVEGKVLPAVAILEERAKA.

Residues 21–23, Arg36, 59–62, Arg113, and Arg146 each bind substrate; these read DLN and HLGR. ATP contacts are provided by residues Lys197, Glu314, and 340–343; that span reads GGDT.

It belongs to the phosphoglycerate kinase family. In terms of assembly, monomer.

The protein localises to the cytoplasm. It catalyses the reaction (2R)-3-phosphoglycerate + ATP = (2R)-3-phospho-glyceroyl phosphate + ADP. It participates in carbohydrate degradation; glycolysis; pyruvate from D-glyceraldehyde 3-phosphate: step 2/5. This chain is Phosphoglycerate kinase, found in Pseudomonas putida (strain W619).